The primary structure comprises 302 residues: Protoheme IX farnesyltransferase (302 aa).

The next 9 membrane-spanning stretches (helical) occupy residues 28 to 48 (LALL…SLDP), 50 to 70 (MLAL…AFNM), 93 to 115 (LNPY…SAAA), 119 to 138 (YVAL…YTQL), 147 to 167 (IIFG…AAAG), 172 to 192 (GGVL…WFLG), 219 to 239 (LIAV…LYYG), 242 to 262 (FLTA…IGGF), and 271 to 291 (ALKL…ILPL).

This sequence belongs to the UbiA prenyltransferase family. Protoheme IX farnesyltransferase subfamily.

It is found in the cell membrane. The enzyme catalyses heme b + (2E,6E)-farnesyl diphosphate + H2O = Fe(II)-heme o + diphosphate. The protein operates within porphyrin-containing compound metabolism; heme O biosynthesis; heme O from protoheme: step 1/1. Converts heme B (protoheme IX) to heme O by substitution of the vinyl group on carbon 2 of heme B porphyrin ring with a hydroxyethyl farnesyl side group. The protein is Protoheme IX farnesyltransferase of Aeropyrum pernix (strain ATCC 700893 / DSM 11879 / JCM 9820 / NBRC 100138 / K1).